The following is a 299-amino-acid chain: 4-hydroxybenzoate octaprenyltransferase (299 aa).

7 helical membrane passes run 34 to 54, 57 to 77, 108 to 128, 163 to 183, 221 to 241, 245 to 265, and 277 to 297; these read IGSL…ADGL, LWTL…GCVI, LWVF…LNWL, WGIP…GWLL, FDLV…ALVD, DLGA…AYEF, and FRAF…IAVA.

This sequence belongs to the UbiA prenyltransferase family. Requires Mg(2+) as cofactor.

The protein localises to the cell inner membrane. The catalysed reaction is all-trans-octaprenyl diphosphate + 4-hydroxybenzoate = 4-hydroxy-3-(all-trans-octaprenyl)benzoate + diphosphate. The protein operates within cofactor biosynthesis; ubiquinone biosynthesis. Its function is as follows. Catalyzes the prenylation of para-hydroxybenzoate (PHB) with an all-trans polyprenyl group. Mediates the second step in the final reaction sequence of ubiquinone-8 (UQ-8) biosynthesis, which is the condensation of the polyisoprenoid side chain with PHB, generating the first membrane-bound Q intermediate 3-octaprenyl-4-hydroxybenzoate. The sequence is that of 4-hydroxybenzoate octaprenyltransferase from Xanthomonas oryzae pv. oryzae (strain MAFF 311018).